The chain runs to 391 residues: MASSLLTTPSQTLAPNPAAARARRSSPAAAQVSFSSPLLPGRRALRCARPVAIEKEVPEKEAPTTFLREDGSGAGSGSVRERFEGMIRRVQGEICAALEEADGSGKRFVEDVWSRPGGVCVHSRVLQDGNVFEKAGVNVSAVIGVCPRSAYRAAKGAAKNGAADGHKAGPVPFFSAGISSVLHPKNPFAPTLHFNYRYFETDAPKDVPGAPRSWWFGGGTDLTPSYLIEEDVKHFHSVQKQTCDKFDPSFYPRFKKWCDDYFYIKHRNERRGLGGIFFDDLNDYDQDMLLNFATECAGSVIPAYIPIIERRKDTPFNEEQKAWQQVRRGRYVEFNLVYDRGTTFGLKTGGRIESILVSLPLTARWEYDHKPEEGSEEWKLLDACINPKEWL.

A compositionally biased stretch (polar residues) spans M1–L13. The disordered stretch occupies residues M1–F34. Positions A14–A30 are enriched in low complexity. The tract at residues V125–K134 is important for dimerization. Substrate is bound at residue S179. H193 serves as the catalytic Proton donor. Substrate contacts are provided by residues N195–R197 and G349–S354. Positions Y331–E366 are important for dimerization.

The protein belongs to the aerobic coproporphyrinogen-III oxidase family. In terms of assembly, homodimer.

The protein resides in the plastid. Its subcellular location is the chloroplast. The enzyme catalyses coproporphyrinogen III + O2 + 2 H(+) = protoporphyrinogen IX + 2 CO2 + 2 H2O. It participates in porphyrin-containing compound metabolism; protoporphyrin-IX biosynthesis; protoporphyrinogen-IX from coproporphyrinogen-III (O2 route): step 1/1. Involved in the heme and chlorophyll biosynthesis. Catalyzes the aerobic oxidative decarboxylation of propionate groups of rings A and B of coproporphyrinogen-III to yield the vinyl groups in protoporphyrinogen-IX. The polypeptide is Oxygen-dependent coproporphyrinogen-III oxidase, chloroplastic (CPX) (Hordeum vulgare (Barley)).